Reading from the N-terminus, the 203-residue chain is Histidine biosynthesis bifunctional protein HisIE (203 aa).

The tract at residues Met1–Phe114 is phosphoribosyl-AMP cyclohydrolase. The segment at Leu115–Gln203 is phosphoribosyl-ATP pyrophosphohydrolase.

This sequence in the N-terminal section; belongs to the PRA-CH family. The protein in the C-terminal section; belongs to the PRA-PH family.

The protein localises to the cytoplasm. The enzyme catalyses 1-(5-phospho-beta-D-ribosyl)-ATP + H2O = 1-(5-phospho-beta-D-ribosyl)-5'-AMP + diphosphate + H(+). The catalysed reaction is 1-(5-phospho-beta-D-ribosyl)-5'-AMP + H2O = 1-(5-phospho-beta-D-ribosyl)-5-[(5-phospho-beta-D-ribosylamino)methylideneamino]imidazole-4-carboxamide. The protein operates within amino-acid biosynthesis; L-histidine biosynthesis; L-histidine from 5-phospho-alpha-D-ribose 1-diphosphate: step 2/9. It functions in the pathway amino-acid biosynthesis; L-histidine biosynthesis; L-histidine from 5-phospho-alpha-D-ribose 1-diphosphate: step 3/9. The protein is Histidine biosynthesis bifunctional protein HisIE (hisI) of Salmonella typhimurium (strain LT2 / SGSC1412 / ATCC 700720).